The following is a 287-amino-acid chain: Probable 18S rRNA (guanine-N(7))-methyltransferase (287 aa).

Residues 214–287 form a disordered region; the sequence is GVEGEEYEQQ…FSGRKRGPKF (74 aa). Acidic residues predominate over residues 217-228; sequence GEEYEQQEEEDS. Positions 234 to 245 are enriched in basic residues; it reads SNRKRDRRRVTK. The span at 253–278 shows a compositional bias: basic and acidic residues; that stretch reads KTKEWIMNKKDRQRKQGREIKNDSKF.

Belongs to the class I-like SAM-binding methyltransferase superfamily. BUD23/WBSCR22 family.

The protein localises to the nucleus. It is found in the nucleoplasm. The protein resides in the cytoplasm. It localises to the perinuclear region. It catalyses the reaction a guanosine in 18S rRNA + S-adenosyl-L-methionine = an N(7)-methylguanosine in 18S rRNA + S-adenosyl-L-homocysteine. Functionally, S-adenosyl-L-methionine-dependent methyltransferase that specifically methylates the N(7) position of a guanine in 18S rRNA. Important for biogenesis end export of the 40S ribosomal subunit independent on its methyltransferase activity. Its function is as follows. S-adenosyl-L-methionine-dependent methyltransferase that specifically methylates the N(7) position of a guanine in 18S rRNA. Requires the methyltransferase adapter protein TRM112 for full rRNA methyltransferase activity. Involved in the pre-rRNA processing steps leading to small-subunit rRNA production independently of its RNA-modifying catalytic activity. Important for biogenesis end export of the 40S ribosomal subunit independent on its methyltransferase activity. This is Probable 18S rRNA (guanine-N(7))-methyltransferase from Dictyostelium discoideum (Social amoeba).